Here is a 722-residue protein sequence, read N- to C-terminus: Polyribonucleotide nucleotidyltransferase (722 aa).

Mg(2+) contacts are provided by D495 and D501. The KH domain occupies 562–621; it reads PRLLSFRIDPELIGTVIGPGGRTIKGITERTNTKIDIEDGGIVTIASHDGVAAEEAQKII. In terms of domain architecture, S1 motif spans 631 to 699; sequence GEIFTGSITR…NRGRINLTLR (69 aa). Residues 701–711 show a composition bias toward polar residues; the sequence is VSQNNNDMNYP. The interval 701–722 is disordered; the sequence is VSQNNNDMNYPQPTPTPVAPLN. Over residues 712-722 the composition is skewed to pro residues; sequence QPTPTPVAPLN.

Belongs to the polyribonucleotide nucleotidyltransferase family. The cofactor is Mg(2+).

It is found in the cytoplasm. It catalyses the reaction RNA(n+1) + phosphate = RNA(n) + a ribonucleoside 5'-diphosphate. In terms of biological role, involved in mRNA degradation. Catalyzes the phosphorolysis of single-stranded polyribonucleotides processively in the 3'- to 5'-direction. This Prochlorococcus marinus (strain MIT 9211) protein is Polyribonucleotide nucleotidyltransferase.